Reading from the N-terminus, the 391-residue chain is Elongation factor Tu (391 aa).

The tr-type G domain occupies 10–201; it reads KPHVNIGTIG…AVDEFIPTPE (192 aa). Residues 19–26 are G1; sequence GHVDHGKT. 19 to 26 is a GTP binding site; it reads GHVDHGKT. Mg(2+) is bound at residue threonine 26. The G2 stretch occupies residues 55–59; it reads GITIS. The tract at residues 76–79 is G3; that stretch reads DCPG. GTP is bound by residues 76-80 and 131-134; these read DCPGH and NKVD. The tract at residues 131–134 is G4; sequence NKVD. A G5 region spans residues 169 to 171; sequence SAL.

It belongs to the TRAFAC class translation factor GTPase superfamily. Classic translation factor GTPase family. EF-Tu/EF-1A subfamily. Monomer.

It localises to the cytoplasm. The enzyme catalyses GTP + H2O = GDP + phosphate + H(+). Functionally, GTP hydrolase that promotes the GTP-dependent binding of aminoacyl-tRNA to the A-site of ribosomes during protein biosynthesis. The sequence is that of Elongation factor Tu from Roseobacter denitrificans (strain ATCC 33942 / OCh 114) (Erythrobacter sp. (strain OCh 114)).